A 512-amino-acid polypeptide reads, in one-letter code: Cytochrome P450 monooxygenase FrzL (512 aa).

The chain crosses the membrane as a helical span at residues 6–26; the sequence is TMLAFVPYLAVFVACYGLVYY. C423 contributes to the heme binding site.

Belongs to the cytochrome P450 family. The cofactor is heme.

Its subcellular location is the membrane. Cytochrome P450 monooxygenase; part of the gene cluster that mediates the biosynthesis of the alkaloid (-)-FR901483, a potent immunosuppressant that shows efficacy in animal models and a probable inhibitor of purine nucleotide biosynthesis by targeting phosphoribosylpyrophosphate amidotransferase (PPAT). The only unassigned enzyme in the cluster is the second cytochrome P450 monooxygenase FrzL. The biosynthesis of (-)-FR901483 starts with the condensation of two L-tyrosines to yield (S,S)-dityrosyl-piperazine. This process occurs in 3 steps with the non-canonical nonribosomal peptide synthetase FrzA catalyzing the reduction of L-tyrosine into L-tyrosinal, the spontaneous condensation of 2 L-tyrosinal units, and the subsequent reduction by the NmrA-like family domain-containing oxidoreductase FrzB. The cytochrome P450 monooxygenase FrzC then performs coupling between N10 and C1' to morph the piperazine into a 1,4-diazabicyclo[3.2.1]octane spiro-fused to a 2,5-cyclohexadienone. The dienone portion is further reduced to cyclohexanone by the flavin-dependent reductase FrzD. The methyltranserases (MTs) FrzE and FrzF are then involved in the methylation at the C10' amine and the C4 phenolic oxygen, respectively. The order of the two MTs appear to be interchangeable. Cleavage of the C9-N10' bond by the dioxygenase FrzG then leads to formation of a conjugated iminium. In addition to the oxidation of C9, an additional dehydrogenation between C7 and C8 can occur to give a likely shunt product. The next biosynthetic step is the intramolecular aldol condensation catalyzed by the newly identified aldolase FrzH to yield an aza-tricyclic product with the formation of a C9-C3' bond. The short-chain dehydrogenase/reductase FrzI then produces dephospho-(-)-FR901483 that is phosphorylated at C4'-OH into (-)-FR901483 by the phosphotransferase FrzJ. The chain is Cytochrome P450 monooxygenase FrzL from Cladobotryum sp.